The following is a 578-amino-acid chain: Arginine--tRNA ligase (578 aa).

The 'HIGH' region signature appears at 127-137 (PNLAKEMHVGH).

The protein belongs to the class-I aminoacyl-tRNA synthetase family. Monomer.

The protein resides in the cytoplasm. The enzyme catalyses tRNA(Arg) + L-arginine + ATP = L-arginyl-tRNA(Arg) + AMP + diphosphate. This chain is Arginine--tRNA ligase, found in Pseudomonas savastanoi pv. phaseolicola (strain 1448A / Race 6) (Pseudomonas syringae pv. phaseolicola (strain 1448A / Race 6)).